We begin with the raw amino-acid sequence, 286 residues long: MKITDHKLSEGIALTFRVPEGNIKHPLIILCHGFCGIRNVLLPCFANAFTEAGFATITFDYRGFGESDGERGRLVPAMQTEDIISVINWAEKQECIDNQRIGLWGTSLGGGHVFSAAAQDQRVKCIVSQLAFADGDVLVTGEMNESERASFLSTLNKMAEKKKNTGKEMFVGVTRVLSDNESKVFFEKVKGQYPEMDIKIPFLTVMETLQYKPAESAAKVQCPVLIVIAGQDSVNPPEQGKALYDAVASGTKELYEEADACHYDIYEGAFFERVAAVQTQWFKKHL.

One can recognise an AB hydrolase-1 domain in the interval 26 to 268 (PLIILCHGFC…DACHYDIYEG (243 aa)).

This sequence belongs to the AB hydrolase superfamily.

This is an uncharacterized protein from Escherichia coli.